The following is a 202-amino-acid chain: Urease accessory protein UreE (202 aa).

The disordered stretch occupies residues 138–202 (RGAYHSHGGH…HGHHHGHKHD (65 aa)). Positions 147–193 (HSHDHGHAAHDHGHAAHDHGHNHDHDHGHAHGHDHQHDHNCDHDHDH) are enriched in basic and acidic residues.

Belongs to the UreE family.

The protein localises to the cytoplasm. Involved in urease metallocenter assembly. Binds nickel. Probably functions as a nickel donor during metallocenter assembly. This chain is Urease accessory protein UreE, found in Rhizobium etli (strain CIAT 652).